The chain runs to 316 residues: MAANSVGKMSEKLRIKVDDVKINPKYVLYGVSTPNKRLYKRYSEFWKLKTRLERDVGSTIPYDFPEKPGVLDRRWQRRYDDPEMIDERRIGLERFLNELYNDRFDSRWRDTKIAQDFLQLSKPNVSQEKSQQHLETADEVGWDEMIRDIKLDLDKESDGTPSVRGALRARTKLHKLRERLEQDVQKKSLPSTEVTRRAALLRSLLKECDDIGTANIAQDRGRLLGVATSDNSSTTEVQGRTNNDLQQGQMQMVRDQEQELVALHRIIQAQRGLALEMNEELQTQNELLTALEDDVDNTGRRLQIANKKARHFNNSA.

The 124-residue stretch at 1–124 (MAANSVGKMS…QDFLQLSKPN (124 aa)) folds into the PX domain. A coiled-coil region spans residues 168 to 186 (RARTKLHKLRERLEQDVQK). Residues 250–312 (MQMVRDQEQE…QIANKKARHF (63 aa)) enclose the t-SNARE coiled-coil homology domain.

As to quaternary structure, possibly multimeric. Associates with VAM3.

The protein localises to the vacuole. In terms of biological role, essential for proper morphogenesis of the vacuole. May exist as structural reinforcement on the surface of the vacuolar membrane and be required for maintenance against rupture by osmotic pressure. The protein is Vacuolar morphogenesis protein 7 (VAM7) of Saccharomyces cerevisiae (strain ATCC 204508 / S288c) (Baker's yeast).